The following is a 486-amino-acid chain: MSKDIRVRYAPSPTGVVHIGNARTALFNYLYARHHGGTFLIRIEDTDRKRHVEDGERSQLENLRWLGMDWDESPESHENYRQSERLDLYQKYIDQLLAEGKAYKSYVTEEELAAERERQEAAGETPRYINEYLGMSEEEKAAYIAEREAAGIIPTVRLAVNESGIYKWHDMVKGDIEFEGGNIGGDWVIQKKDGYPTYNFAVVIDDHDMQISHVIRGDDHIANTPKQLMVYEALGWEAPEFGHMTLIINSETGKKLSKRDTNTLQFIEDYRKKGYLPEAVFNFIALLGWNPGGEDEIFSREELIKLFDENRLSKSPAAFDQKKLDWMSNDYIKNADLETIFEMAKPFLEEAGRLTDKAEKLVELYKPQMKSVDEIIPLTDLFFSDFPELTEAEREVMTGETVPTVLEAFKAKLEAMTDDEFVTENIFPQIKAVQKETGIKGKNLFMPIRIAVSGEMHGPELPDTIFLLGREKSIQHIENILKEISK.

The short motif at 11–21 (PSPTGVVHIGN) is the 'HIGH' region element. The 'KMSKS' region motif lies at 255–259 (KLSKR). Lys-258 serves as a coordination point for ATP.

The protein belongs to the class-I aminoacyl-tRNA synthetase family. Glutamate--tRNA ligase type 1 subfamily. As to quaternary structure, monomer.

The protein localises to the cytoplasm. It catalyses the reaction tRNA(Glu) + L-glutamate + ATP = L-glutamyl-tRNA(Glu) + AMP + diphosphate. In terms of biological role, catalyzes the attachment of glutamate to tRNA(Glu) in a two-step reaction: glutamate is first activated by ATP to form Glu-AMP and then transferred to the acceptor end of tRNA(Glu). The polypeptide is Glutamate--tRNA ligase (Streptococcus pneumoniae (strain CGSP14)).